Here is a 695-residue protein sequence, read N- to C-terminus: Elongation factor G (695 aa).

One can recognise a tr-type G domain in the interval 8-282 (EKTRNIGIMA…AVLDYLPAPT (275 aa)). GTP-binding positions include 17–24 (AHIDAGKT), 81–85 (DTPGH), and 135–138 (NKMD).

This sequence belongs to the TRAFAC class translation factor GTPase superfamily. Classic translation factor GTPase family. EF-G/EF-2 subfamily.

It localises to the cytoplasm. Its function is as follows. Catalyzes the GTP-dependent ribosomal translocation step during translation elongation. During this step, the ribosome changes from the pre-translocational (PRE) to the post-translocational (POST) state as the newly formed A-site-bound peptidyl-tRNA and P-site-bound deacylated tRNA move to the P and E sites, respectively. Catalyzes the coordinated movement of the two tRNA molecules, the mRNA and conformational changes in the ribosome. The protein is Elongation factor G of Listeria welshimeri serovar 6b (strain ATCC 35897 / DSM 20650 / CCUG 15529 / CIP 8149 / NCTC 11857 / SLCC 5334 / V8).